The primary structure comprises 1066 residues: DNA-directed RNA polymerase subunit beta (1066 aa).

This sequence belongs to the RNA polymerase beta chain family. In plastids the minimal PEP RNA polymerase catalytic core is composed of four subunits: alpha, beta, beta', and beta''. When a (nuclear-encoded) sigma factor is associated with the core the holoenzyme is formed, which can initiate transcription.

Its subcellular location is the plastid. It localises to the chloroplast. The catalysed reaction is RNA(n) + a ribonucleoside 5'-triphosphate = RNA(n+1) + diphosphate. In terms of biological role, DNA-dependent RNA polymerase catalyzes the transcription of DNA into RNA using the four ribonucleoside triphosphates as substrates. This is DNA-directed RNA polymerase subunit beta from Coffea arabica (Arabian coffee).